Consider the following 349-residue polypeptide: Magnesium-protoporphyrin IX monomethyl ester [oxidative] cyclase (349 aa).

A compositionally biased stretch (low complexity) spans 1–10 (MTATTATAPT). Residues 1 to 23 (MTATTATAPTMRGGGRNELPPHL) are disordered.

It belongs to the AcsF family. Requires Fe cation as cofactor.

It carries out the reaction Mg-protoporphyrin IX 13-monomethyl ester + 3 NADPH + 3 O2 + 2 H(+) = 3,8-divinyl protochlorophyllide a + 3 NADP(+) + 5 H2O. It participates in porphyrin-containing compound metabolism; chlorophyll biosynthesis (light-independent). In terms of biological role, catalyzes the formation of the isocyclic ring in chlorophyll biosynthesis. Mediates the cyclase reaction, which results in the formation of divinylprotochlorophyllide (Pchlide) characteristic of all chlorophylls from magnesium-protoporphyrin IX 13-monomethyl ester (MgPMME). The chain is Magnesium-protoporphyrin IX monomethyl ester [oxidative] cyclase from Prochlorococcus marinus (strain MIT 9313).